The chain runs to 61 residues: Temporin-SN3 (61 aa).

A signal peptide spans 1–22; it reads MFTLKKTLLLLFFLGTINLSLC. Positions 23-44 are cleaved as a propeptide — removed in mature form; the sequence is EEERNAEEERRDGDDEMDVEVK. Lys-61 bears the Lysine amide mark.

It belongs to the frog skin active peptide (FSAP) family. Temporin subfamily. In terms of tissue distribution, expressed by the skin glands.

It is found in the secreted. Its function is as follows. Antimicrobial peptide. Active against some Gram-positive and Gram-negative bacterial strains. Active against fungus C.glabrata 090902 but not against C.albicans ATCC 12231. Shows weak hemolytic activity against human erythrocytes. This Sylvirana spinulosa (Fine-spined frog) protein is Temporin-SN3.